Reading from the N-terminus, the 76-residue chain is Omega/kappa-hexatoxin-Ar1g (76 aa).

The signal sequence occupies residues 1–22; the sequence is MNTATGFIVLLVLATVLGGIEA. The propeptide occupies 23–35; the sequence is GESHMRKDAMGRV. 3 cysteine pairs are disulfide-bonded: Cys-40/Cys-55, Cys-47/Cys-60, and Cys-54/Cys-74.

Belongs to the neurotoxin 08 (Shiva) family. 02 (omega/kappa toxin) subfamily. In terms of tissue distribution, expressed by the venom gland.

Its subcellular location is the secreted. In terms of biological role, toxin that may inhibit ion channels. This is Omega/kappa-hexatoxin-Ar1g from Atrax robustus (Sydney funnel-web spider).